A 275-amino-acid polypeptide reads, in one-letter code: Undecaprenyl-diphosphatase (275 aa).

7 consecutive transmembrane segments (helical) span residues 1–21 (MTTFKAILLGIVQGLTEFLPV), 41–61 (ILFLTILLHVGTLFSVFFVYA), 95–115 (LLIIVATIPTGIIGLFFKDLF), 118–138 (FYNSTLIIGISLLVTGTLLWT), 192–212 (ATKFSFLISIPAILGATVFEV), 223–243 (FTLTMLIAGVLASFLSGVFAI), and 255–275 (LYYFSYYTWTVGSIVILFSLL).

It belongs to the UppP family.

It localises to the cell membrane. The catalysed reaction is di-trans,octa-cis-undecaprenyl diphosphate + H2O = di-trans,octa-cis-undecaprenyl phosphate + phosphate + H(+). In terms of biological role, catalyzes the dephosphorylation of undecaprenyl diphosphate (UPP). Confers resistance to bacitracin. The polypeptide is Undecaprenyl-diphosphatase (Alkaliphilus metalliredigens (strain QYMF)).